The chain runs to 503 residues: Cytochrome P450 6l1 (503 aa).

A heme-binding site is contributed by Cys438.

Belongs to the cytochrome P450 family. Requires heme as cofactor. Detected only in testes and accessory glands of male adults.

Its subcellular location is the endoplasmic reticulum membrane. The protein resides in the microsome membrane. The sequence is that of Cytochrome P450 6l1 (CYP6L1) from Blattella germanica (German cockroach).